A 460-amino-acid polypeptide reads, in one-letter code: Signal recognition particle 54 kDa protein (460 aa).

GTP is bound by residues 104-111 (GLQGSGKT), 184-188 (DTAGR), and 242-245 (TKLD).

This sequence belongs to the GTP-binding SRP family. SRP54 subfamily. In terms of assembly, part of the signal recognition particle protein translocation system, which is composed of SRP and FtsY. Archaeal SRP consists of a 7S RNA molecule of 300 nucleotides and two protein subunits: SRP54 and SRP19.

Its subcellular location is the cytoplasm. It carries out the reaction GTP + H2O = GDP + phosphate + H(+). Involved in targeting and insertion of nascent membrane proteins into the cytoplasmic membrane. Binds to the hydrophobic signal sequence of the ribosome-nascent chain (RNC) as it emerges from the ribosomes. The SRP-RNC complex is then targeted to the cytoplasmic membrane where it interacts with the SRP receptor FtsY. This Halobacterium salinarum (strain ATCC 29341 / DSM 671 / R1) protein is Signal recognition particle 54 kDa protein.